Consider the following 455-residue polypeptide: Zinc finger and BTB domain-containing protein 8A.2 (455 aa).

A BTB domain is found at 24–92; that stretch reads CDCHIMIDGH…MYSGKLNLSG (69 aa). 2 C2H2-type zinc fingers span residues 299–321 and 327–350; these read FKCP…LLCH and YPCQ…RTIH.

The protein localises to the nucleus. In terms of biological role, may be involved in transcriptional regulation. This chain is Zinc finger and BTB domain-containing protein 8A.2 (zbtb8a.2), found in Xenopus tropicalis (Western clawed frog).